Consider the following 136-residue polypeptide: Large-conductance mechanosensitive channel (136 aa).

The next 4 membrane-spanning stretches (helical) occupy residues 9–29, 32–52, 54–74, and 79–99; these read AFAS…GAAF, IVSS…LGGV, FSDL…VVIA, and IQTV…LKAI.

Belongs to the MscL family. As to quaternary structure, homopentamer.

The protein resides in the cell inner membrane. Channel that opens in response to stretch forces in the membrane lipid bilayer. May participate in the regulation of osmotic pressure changes within the cell. This chain is Large-conductance mechanosensitive channel, found in Shewanella oneidensis (strain ATCC 700550 / JCM 31522 / CIP 106686 / LMG 19005 / NCIMB 14063 / MR-1).